A 213-amino-acid chain; its full sequence is LIM domain-containing protein PLIM2c (213 aa).

LIM zinc-binding domains follow at residues 9-69 (DKCK…LFKE) and 105-165 (DKCA…LFLE). Residues 177-213 (ANHRRSTAEEDKTEPKEDEANPTEEETSDAAAEEHES) are disordered. Residues 182–195 (STAEEDKTEPKEDE) are compositionally biased toward basic and acidic residues.

Interacts with F-actin. Exclusively expressed in pollen grains.

It localises to the cytoplasm. The protein localises to the cytoskeleton. Its function is as follows. Binds to actin filaments and promotes cross-linking into thick bundles. Has an actin-stabilizing activity. Associates predominantly with long and dynamic actin bundles in the shank of growing pollen tubes. The actin regulatory activities are inhibited by pH &gt; 6.8 and/or high [Ca(2+)]. The sequence is that of LIM domain-containing protein PLIM2c from Arabidopsis thaliana (Mouse-ear cress).